We begin with the raw amino-acid sequence, 295 residues long: Nucleotide-binding protein PEPE_0450 (295 aa).

12-19 is a binding site for ATP; it reads GMSGAGKT. Residue 62-65 coordinates GTP; sequence DLRS.

Belongs to the RapZ-like family.

Displays ATPase and GTPase activities. The protein is Nucleotide-binding protein PEPE_0450 of Pediococcus pentosaceus (strain ATCC 25745 / CCUG 21536 / LMG 10740 / 183-1w).